The primary structure comprises 447 residues: Probable glycine dehydrogenase (decarboxylating) subunit 1 (447 aa).

It belongs to the GcvP family. N-terminal subunit subfamily. The glycine cleavage system is composed of four proteins: P, T, L and H. In this organism, the P 'protein' is a heterodimer of two subunits.

It catalyses the reaction N(6)-[(R)-lipoyl]-L-lysyl-[glycine-cleavage complex H protein] + glycine + H(+) = N(6)-[(R)-S(8)-aminomethyldihydrolipoyl]-L-lysyl-[glycine-cleavage complex H protein] + CO2. The glycine cleavage system catalyzes the degradation of glycine. The P protein binds the alpha-amino group of glycine through its pyridoxal phosphate cofactor; CO(2) is released and the remaining methylamine moiety is then transferred to the lipoamide cofactor of the H protein. This is Probable glycine dehydrogenase (decarboxylating) subunit 1 from Bacillus cytotoxicus (strain DSM 22905 / CIP 110041 / 391-98 / NVH 391-98).